We begin with the raw amino-acid sequence, 377 residues long: MWQQAIGDALGITARNLKKFGDRFPHVSDGSNKYVLNDNTDWTDGFWSGILWLCYEYTGDEQYREGAVRTVASFRERLDRFENLDHHDIGFLYSLSAKAQWIVEKDESARKLALDAADVLMRRWRADAGIIQAWGPKGDPENGGRIIIDCLLNLPLLLWAGEQTGDPEYRRVAEAHALKSRRFLVRGDDSSYHTFYFDPENGNAIRGGTHQGNTDGSTWTRGQAWGIYGFALNSRYLGNADLLETAKRMARHFLARVPEDGVVYWDFEVPQEPSSYRDSSASAITACGLLEIASQLDESDPERQRFIDAAKTTVTALRDGYAERDDGEAEGFIRRGSYHVRGGISPDDYTIWGDYYYLEALLRLERGVTGYWYERGR.

The Nucleophile role is filled by Asp-88. Residue Asp-149 is the Proton donor of the active site.

This sequence belongs to the glycosyl hydrolase 88 family. Monomer.

It localises to the cytoplasm. It carries out the reaction beta-D-Delta(4)-GlcA-(1-&gt;4)-beta-D-Glc-(1-&gt;4)-alpha-L-Rha-(1-&gt;3)-D-Glc + H2O = beta-D-Glc-(1-&gt;4)-alpha-L-Rha-(1-&gt;3)-D-Glc + 5-dehydro-4-deoxy-D-glucuronate. Its activity is regulated as follows. Partially inhibited by divalent metal ions such as calcium, copper, iron and mercury. Its function is as follows. Catalyzes the hydrolysis of oligosaccharides with unsaturated glucuronyl residues at the non-reducing terminal, to a sugar or an amino sugar, and an unsaturated D-glucuronic acid (GlcA), which is nonenzymatically converted immediately to alpha-keto acid. The chain is Unsaturated glucuronyl hydrolase (ugl) from Bacillus sp. (strain GL1).